The sequence spans 392 residues: Heat-inducible transcription repressor HrcA (392 aa).

Belongs to the HrcA family.

In terms of biological role, negative regulator of class I heat shock genes (grpE-dnaK-dnaJ and groELS operons). Prevents heat-shock induction of these operons. The protein is Heat-inducible transcription repressor HrcA of Chlamydia trachomatis serovar L2 (strain ATCC VR-902B / DSM 19102 / 434/Bu).